The following is a 1190-amino-acid chain: Phosphatidylinositol 3,4,5-trisphosphate 5-phosphatase 1 (1190 aa).

The SH2 domain occupies 8–104; that stretch reads WNHGNITRSK…GLVTHLQFPV (97 aa). A compositionally biased stretch (acidic residues) spans 111–120; sequence AIDEPEEDTE. The interval 111–130 is disordered; that stretch reads AIDEPEEDTESVMSPPELPP. The SH3-binding 1 motif lies at 126–131; the sequence is PELPPR. Residue Ser245 is modified to Phosphoserine. Residues 914–917 carry the NPXY motif 1 motif; the sequence is NPNY. Tyr917 bears the Phosphotyrosine mark. At Ser934 the chain carries Phosphoserine. Tyr944 is modified (phosphotyrosine). Residues 946–1190 form a disordered region; that stretch reads QLPKDSSLGP…ESLLGRTAMQ (245 aa). Pro residues predominate over residues 961–971; that stretch reads PPTPPSQPPLS. Thr963 is modified (phosphothreonine). A phosphoserine mark is found at Ser966 and Ser971. The SH3-binding 2 signature appears at 969 to 974; sequence PLSPKK. The span at 989 to 998 shows a compositional bias: basic and acidic residues; the sequence is QETRPGDLGK. The interaction with DAB2 stretch occupies residues 1014–1028; the sequence is MFENPLYGSVSPFPK. Positions 1017–1020 match the NPXY motif 2 motif; that stretch reads NPLY. Tyr1020 carries the post-translational modification Phosphotyrosine. The segment covering 1031-1045 has biased composition (basic and acidic residues); that stretch reads PRKEQESPKMMRKEP. Residues 1038 to 1049 carry the SH3-binding 3 motif; it reads PKMMRKEPPPCP. Residues 1140 to 1149 show a composition bias toward pro residues; sequence IPAPRPPLPV. The span at 1161–1183 shows a compositional bias: basic and acidic residues; that stretch reads KGRDYRDNTELPHHGKHRQEESL.

It belongs to the inositol 1,4,5-trisphosphate 5-phosphatase family. Interacts with tyrosine phosphorylated forms of SHC1. Interacts with tyrosine phosphorylated form of DOK1. Interacts with tyrosine phosphorylated form of DOK3. Interacts with tyrosine phosphorylated form of SLAMF1/CD150. Interacts with PTPN11/SHP-2 in response to IL-3. Interacts with receptor EPOR. Interacts with receptors MS4A2/FCER1B and FCER1G. Interacts with receptors FCGR2B and FCGR3. Interacts with receptor FCGR2A, leading to regulate gene expression during the phagocytic process. Interacts with GRB2. Interacts with PLCG1. Interacts with tyrosine kinases SRC and TEC. Interacts with c-Met/MET. Interacts with MILR1 (tyrosine-phosphorylated). Can weakly interact (via NPXY motif 2) with DAB2 (via PID domain); the interaction is impaired by tyrosine phosphorylation of the NPXY motif. Interacts (via SH2 domain) with tyrosine phosphorylated KLRC1 (via ITIM). Interacts with MPL/TPOR. In terms of processing, tyrosine phosphorylated by the members of the SRC family after exposure to a diverse array of extracellular stimuli such as cytokines, growth factors, antibodies, chemokines, integrin ligands and hypertonic and oxidative stress. Phosphorylated upon IgG receptor FCGR2B-binding.

The protein localises to the cytoplasm. Its subcellular location is the cell membrane. The protein resides in the membrane raft. It is found in the cytoskeleton. The catalysed reaction is a 1,2-diacyl-sn-glycero-3-phospho-(1D-myo-inositol-3,4,5-trisphosphate) + H2O = a 1,2-diacyl-sn-glycero-3-phospho-(1D-myo-inositol-3,4-bisphosphate) + phosphate. It carries out the reaction 1D-myo-inositol 1,3,4,5-tetrakisphosphate + H2O = 1D-myo-inositol 1,3,4-trisphosphate + phosphate. The enzyme catalyses a 1,2-diacyl-sn-glycero-3-phospho-(1D-myo-inositol-4,5-bisphosphate) + H2O = a 1,2-diacyl-sn-glycero-3-phospho-(1D-myo-inositol 4-phosphate) + phosphate. Its activity is regulated as follows. Activated upon translocation to the sites of synthesis of PtdIns(3,4,5)P3 in the membrane. In terms of biological role, phosphatidylinositol (PtdIns) phosphatase that specifically hydrolyzes the 5-phosphate of phosphatidylinositol-3,4,5-trisphosphate (PtdIns(3,4,5)P3) to produce PtdIns(3,4)P2, thereby negatively regulating the PI3K (phosphoinositide 3-kinase) pathways. Also able to hydrolyze the 5-phosphate of phosphatidylinositol-4,5-bisphosphate (PtdIns(4,5)P3) and inositol 1,3,4,5-tetrakisphosphate. Acts as a negative regulator of B-cell antigen receptor signaling. Mediates signaling from the FC-gamma-RIIB receptor (FCGR2B), playing a central role in terminating signal transduction from activating immune/hematopoietic cell receptor systems. Acts as a negative regulator of myeloid cell proliferation/survival and chemotaxis, mast cell degranulation, immune cells homeostasis, integrin alpha-IIb/beta-3 signaling in platelets and JNK signaling in B-cells. Regulates proliferation of osteoclast precursors, macrophage programming, phagocytosis and activation and is required for endotoxin tolerance. Involved in the control of cell-cell junctions, CD32a signaling in neutrophils and modulation of EGF-induced phospholipase C activity. Key regulator of neutrophil migration, by governing the formation of the leading edge and polarization required for chemotaxis. Modulates FCGR3/CD16-mediated cytotoxicity in NK cells. Mediates the activin/TGF-beta-induced apoptosis through its Smad-dependent expression. In Rattus norvegicus (Rat), this protein is Phosphatidylinositol 3,4,5-trisphosphate 5-phosphatase 1 (Inpp5d).